The following is an 842-amino-acid chain: Protein P (842 aa).

The terminal protein domain (TP) stretch occupies residues 1–177; it reads MPLSYQHFRR…FCGSPYSWEQ (177 aa). Residues 178-345 form a spacer region; sequence ELHHGAFLDG…YCLTHLVNLL (168 aa). The interval 186–273 is disordered; the sequence is DGPSRMGEES…AKNIASRSAS (88 aa). The span at 223 to 239 shows a compositional bias: polar residues; that stretch reads GPQSQQRPLDGSQQGRS. The tract at residues 346–689 is polymerase/reverse transcriptase domain (RT); it reads EDWGPCTEHG…YLNLYPVARQ (344 aa). Positions 356-599 constitute a Reverse transcriptase domain; sequence KHHIRIPRTP…YSLNFMGYVI (244 aa). Asp-428, Asp-550, and Asp-551 together coordinate Mg(2+).

This sequence belongs to the hepadnaviridae P protein family.

The enzyme catalyses DNA(n) + a 2'-deoxyribonucleoside 5'-triphosphate = DNA(n+1) + diphosphate. The catalysed reaction is Endonucleolytic cleavage to 5'-phosphomonoester.. Activated by host HSP70 and HSP40 in vitro to be able to bind the epsilon loop of the pgRNA. Because deletion of the RNase H region renders the protein partly chaperone-independent, the chaperones may be needed indirectly to relieve occlusion of the RNA-binding site by this domain. Inhibited by several reverse-transcriptase inhibitors: Lamivudine, Adefovir and Entecavir. In terms of biological role, multifunctional enzyme that converts the viral RNA genome into dsDNA in viral cytoplasmic capsids. This enzyme displays a DNA polymerase activity that can copy either DNA or RNA templates, and a ribonuclease H (RNase H) activity that cleaves the RNA strand of RNA-DNA heteroduplexes in a partially processive 3'- to 5'-endonucleasic mode. Neo-synthesized pregenomic RNA (pgRNA) are encapsidated together with the P protein, and reverse-transcribed inside the nucleocapsid. Initiation of reverse-transcription occurs first by binding the epsilon loop on the pgRNA genome, and is initiated by protein priming, thereby the 5'-end of (-)DNA is covalently linked to P protein. Partial (+)DNA is synthesized from the (-)DNA template and generates the relaxed circular DNA (RC-DNA) genome. After budding and infection, the RC-DNA migrates in the nucleus, and is converted into a plasmid-like covalently closed circular DNA (cccDNA). The activity of P protein does not seem to be necessary for cccDNA generation, and is presumably released from (+)DNA by host nuclear DNA repair machinery. The sequence is that of Protein P from Homo sapiens (Human).